The following is a 118-amino-acid chain: Small ribosomal subunit protein uS13 (118 aa).

The disordered stretch occupies residues 92–118 (RRGLPVRGQRTKTNARTRKGPRKPIKK).

This sequence belongs to the universal ribosomal protein uS13 family. As to quaternary structure, part of the 30S ribosomal subunit. Forms a loose heterodimer with protein S19. Forms two bridges to the 50S subunit in the 70S ribosome.

In terms of biological role, located at the top of the head of the 30S subunit, it contacts several helices of the 16S rRNA. In the 70S ribosome it contacts the 23S rRNA (bridge B1a) and protein L5 of the 50S subunit (bridge B1b), connecting the 2 subunits; these bridges are implicated in subunit movement. Contacts the tRNAs in the A and P-sites. The sequence is that of Small ribosomal subunit protein uS13 from Yersinia enterocolitica serotype O:8 / biotype 1B (strain NCTC 13174 / 8081).